The primary structure comprises 386 residues: MAP kinase-activated protein kinase 2 (386 aa).

A disordered region spans residues 1-29 (MLSGSPGQTPPAPFPSPPPPAPAQPPPPF). A compositionally biased stretch (pro residues) spans 8 to 29 (QTPPAPFPSPPPPAPAQPPPPF). Residues 50–311 (KVTSQVLGLG…ITEFMNHPWI (262 aa)) enclose the Protein kinase domain. Residues 56 to 64 (LGLGINGKV) and Lys79 contribute to the ATP site. 125 to 127 (ECL) lines the staurosporine pocket. Residue Asp172 is the Proton acceptor of the active site. Thr208 is modified (phosphothreonine; by MAPK14). Phosphoserine; by MAPK14 is present on Ser258. Ser314 bears the Phosphoserine; by autocatalysis mark. Residues 314–350 (STKVPQTPLHTSRVLKEDKERWEDVKEEMTSALATMR) are autoinhibitory helix. Thr320 is modified (phosphothreonine; by MAPK14). 2 short sequence motifs (nuclear export signal (NES)) span residues 331 to 354 (DKERWEDVKEEMTSALATMRVDYE) and 342 to 351 (MTSALATMRV). A Glycyl lysine isopeptide (Lys-Gly) (interchain with G-Cter in SUMO) cross-link involves residue Lys339. The tract at residues 352–376 (DYEQIKIKKIEDASNPLLLKRRKKA) is p38 MAPK-binding site. 2 short sequence motifs (bipartite nuclear localization signal) span residues 357–360 (KIKK) and 371–375 (KRRKK).

It belongs to the protein kinase superfamily. CAMK Ser/Thr protein kinase family. In terms of assembly, heterodimer with p38-alpha/MAPK14; this heterodimer forms a stable complex: molecules are positioned 'face to face' so that the ATP-binding sites of both kinases are at the heterodimer interface. Interacts with PHC2. Interacts with HSF1. Sumoylation inhibits the protein kinase activity. Post-translationally, phosphorylated and activated by MAP kinase p38-alpha/MAPK14 at Thr-208; Ser-258 and Thr-320. As to expression, ubiquitously expressed (at protein level).

The protein resides in the cytoplasm. Its subcellular location is the nucleus. The catalysed reaction is L-seryl-[protein] + ATP = O-phospho-L-seryl-[protein] + ADP + H(+). The enzyme catalyses L-threonyl-[protein] + ATP = O-phospho-L-threonyl-[protein] + ADP + H(+). Activated following phosphorylation by p38-alpha/MAPK14 following various stresses. Inhibited following sumoylation. Specifically inhibited by pyrrolopyridine inhibitors. Stress-activated serine/threonine-protein kinase involved in cytokine production, endocytosis, reorganization of the cytoskeleton, cell migration, cell cycle control, chromatin remodeling, DNA damage response and transcriptional regulation. Following stress, it is phosphorylated and activated by MAP kinase p38-alpha/MAPK14, leading to phosphorylation of substrates. Phosphorylates serine in the peptide sequence, Hyd-X-R-X(2)-S, where Hyd is a large hydrophobic residue. Phosphorylates ALOX5, CDC25B, CDC25C, CEP131, ELAVL1, HNRNPA0, HSP27/HSPB1, KRT18, KRT20, LIMK1, LSP1, PABPC1, PARN, PDE4A, RCSD1, RPS6KA3, TAB3 and TTP/ZFP36. Phosphorylates HSF1; leading to the interaction with HSP90 proteins and inhibiting HSF1 homotrimerization, DNA-binding and transactivation activities. Mediates phosphorylation of HSP27/HSPB1 in response to stress, leading to dissociation of HSP27/HSPB1 from large small heat-shock protein (sHsps) oligomers and impairment of their chaperone activities and ability to protect against oxidative stress effectively. Involved in inflammatory response by regulating tumor necrosis factor (TNF) and IL6 production post-transcriptionally: acts by phosphorylating AU-rich elements (AREs)-binding proteins ELAVL1, HNRNPA0, PABPC1 and TTP/ZFP36, leading to regulation of the stability and translation of TNF and IL6 mRNAs. Phosphorylation of TTP/ZFP36, a major post-transcriptional regulator of TNF, promotes its binding to 14-3-3 proteins and reduces its ARE mRNA affinity leading to inhibition of dependent degradation of ARE-containing transcripts. Phosphorylates CEP131 in response to cellular stress following ultraviolet irradiation which promotes binding of CEP131 to 14-3-3 proteins and inhibits formation of novel centriolar satellites. Also involved in late G2/M checkpoint following DNA damage through a process of post-transcriptional mRNA stabilization: following DNA damage, relocalizes from nucleus to cytoplasm and phosphorylates HNRNPA0 and PARN, leading to stabilization of GADD45A mRNA. Involved in toll-like receptor signaling pathway (TLR) in dendritic cells: required for acute TLR-induced macropinocytosis by phosphorylating and activating RPS6KA3. The protein is MAP kinase-activated protein kinase 2 (Mapkapk2) of Mus musculus (Mouse).